A 467-amino-acid chain; its full sequence is Actinorhodin polyketide putative beta-ketoacyl synthase 1 (467 aa).

The interval 1–35 (MPLDAAPVDPASRGPVSAFEPPSSHGADDDDDHRT) is disordered. The region spanning 45–459 (KRRVVITGVG…GFQSAMVLRD (415 aa)) is the Ketosynthase family 3 (KS3) domain. Residues cysteine 212, histidine 352, and histidine 389 each act as for beta-ketoacyl synthase activity in the active site.

The protein belongs to the thiolase-like superfamily. Beta-ketoacyl-ACP synthases family.

It participates in antibiotic biosynthesis; actinorhodin biosynthesis. In Streptomyces coelicolor (strain ATCC BAA-471 / A3(2) / M145), this protein is Actinorhodin polyketide putative beta-ketoacyl synthase 1.